The primary structure comprises 259 residues: Snake venom serine proteinase 2 (259 aa).

The N-terminal stretch at 1 to 18 (MVLIRVLANLLILQLSYA) is a signal peptide. Residues 19–24 (QKSSEL) constitute a propeptide that is removed on maturation. The Peptidase S1 domain maps to 25–250 (IFGGRPCNRN…HLDWIQSIIA (226 aa)). Cystine bridges form between C31–C162, C49–C65, C97–C257, C141–C211, C173–C190, and C201–C226. Active-site charge relay system residues include H64 and D109. The active-site Charge relay system is the S205.

The protein belongs to the peptidase S1 family. Snake venom subfamily. As to quaternary structure, monomer. In terms of tissue distribution, expressed by the venom gland.

The protein resides in the secreted. Snake venom serine protease that may act in the hemostasis system of the prey. This is Snake venom serine proteinase 2 from Crotalus adamanteus (Eastern diamondback rattlesnake).